Consider the following 166-residue polypeptide: Large ribosomal subunit protein uL10 (166 aa).

The protein belongs to the universal ribosomal protein uL10 family. Part of the ribosomal stalk of the 50S ribosomal subunit. The N-terminus interacts with L11 and the large rRNA to form the base of the stalk. The C-terminus forms an elongated spine to which L12 dimers bind in a sequential fashion forming a multimeric L10(L12)X complex.

Functionally, forms part of the ribosomal stalk, playing a central role in the interaction of the ribosome with GTP-bound translation factors. The sequence is that of Large ribosomal subunit protein uL10 from Bacillus cereus (strain 03BB102).